We begin with the raw amino-acid sequence, 305 residues long: Acetaldehyde dehydrogenase (305 aa).

NAD(+) is bound at residue 13–16 (SGNI). The active-site Acyl-thioester intermediate is Cys128. Residues 159-167 (SAGPGTRQN) and Asn278 contribute to the NAD(+) site.

It belongs to the acetaldehyde dehydrogenase family.

It catalyses the reaction acetaldehyde + NAD(+) + CoA = acetyl-CoA + NADH + H(+). This is Acetaldehyde dehydrogenase from Chloroflexus aurantiacus (strain ATCC 29366 / DSM 635 / J-10-fl).